The following is a 536-amino-acid chain: Bicoumarin synthase desC (536 aa).

The chain crosses the membrane as a helical span at residues 12–32 (YVALAGITGFFLVFLGFLVVI). N-linked (GlcNAc...) asparagine glycosylation is found at Asn-149 and Asn-371. Cys-480 contributes to the heme binding site.

The protein belongs to the cytochrome P450 family. Heme is required as a cofactor.

The protein resides in the membrane. It catalyses the reaction 2 7-demethylsiderin + NADPH + O2 = desertorin A + NADP(+) + 2 H2O. Its pathway is secondary metabolite biosynthesis. Its function is as follows. Non-reducing polyketide synthase; part of the gene cluster that mediates the biosynthesis of the bicoumarin desertorin. The non-reducing polyketide synthase desS first catalyzes the formation of the pentaketidic 4,7-dihydroxy-5-methylcoumarin from acetyl coenzyme A and 4 malonyl coenzyme A molecules. Further O-methylation by desB leads to the formation of 7-demethylsiderin. Then, an oxidative phenol coupling catalyzed by the cytochrome P450 monooxygenase desC forms the 6,8'-dimer M-desertorin A via dimerization the monomeric precursor, 7-demethylsiderin. M-desertorin A is further converted to M-desertorin C. The sequence is that of Bicoumarin synthase desC from Aspergillus desertorum (Emericella desertorum).